The primary structure comprises 81 residues: Beta-catenin-interacting protein 1 (81 aa).

At serine 59 the chain carries Phosphoserine.

This sequence belongs to the CTNNBIP1 family. As to quaternary structure, binds CTNNB1.

The protein localises to the cytoplasm. Its subcellular location is the nucleus. Prevents the interaction between CTNNB1 and TCF family members, and acts as a negative regulator of the Wnt signaling pathway. This Homo sapiens (Human) protein is Beta-catenin-interacting protein 1 (CTNNBIP1).